A 485-amino-acid polypeptide reads, in one-letter code: Amidophosphoribosyltransferase, chloroplastic (485 aa).

A chloroplast-targeting transit peptide spans 1 to 18 (KTTNTFASVNDDEKPREE). Cys19 serves as the catalytic Nucleophile. The 219-residue stretch at 19 to 237 (CGVVGIYGDP…PGEVVVVDHT (219 aa)) folds into the Glutamine amidotransferase type-2 domain. Position 253 (Cys253) interacts with [4Fe-4S] cluster. 3 residues coordinate Mg(2+): Ser300, Asp362, and Asp363. [4Fe-4S] cluster is bound by residues Cys399, Cys450, and Cys453.

In the C-terminal section; belongs to the purine/pyrimidine phosphoribosyltransferase family. Mg(2+) is required as a cofactor. Requires [4Fe-4S] cluster as cofactor.

It localises to the plastid. Its subcellular location is the chloroplast. It carries out the reaction 5-phospho-beta-D-ribosylamine + L-glutamate + diphosphate = 5-phospho-alpha-D-ribose 1-diphosphate + L-glutamine + H2O. It participates in purine metabolism; IMP biosynthesis via de novo pathway; N(1)-(5-phospho-D-ribosyl)glycinamide from 5-phospho-alpha-D-ribose 1-diphosphate: step 1/2. In Vigna aconitifolia (Moth bean), this protein is Amidophosphoribosyltransferase, chloroplastic (PUR1).